A 351-amino-acid polypeptide reads, in one-letter code: MAAAPLKVCIVGSGNWGSAVAKIIGSNVKTLQKFSSTVKMWVFEETVNGRKLTDIINNDHENVKYLPGHKLPENVVAVPNLSEAVQDADLLVFVIPHQFIHKICDEITGRVPEKALGITLIKGIDEGPDGLKLISDIIREKMGIDISVLMGANIASEVAAEKFCETTIGSKVMQNGLLFKELLQTPNFRITVVDDADTVELCGALKNIVAVGAGFCDGLRCGDNTKAAVIRLGLMEMIAFAKIFCKGQVSTATFLESCGVADLITTCYGGRNRRVAEAFARTGKTIEELEKELLNGQKLQGPQTSAEVYRILRQKGLLDKFPLFTAVYQICYEGRPVTQMLSCLQSHPEHI.

An NAD(+)-binding site is contributed by 12 to 17 (GSGNWG). Substrate is bound at residue K122. A155 is an NAD(+) binding site. K206 functions as the Proton acceptor in the catalytic mechanism. Residues R271, K298, and Q300 each contribute to the NAD(+) site. Residue 271–272 (RN) coordinates substrate.

Belongs to the NAD-dependent glycerol-3-phosphate dehydrogenase family. As to quaternary structure, interacts with SCN5A.

The protein resides in the cytoplasm. It catalyses the reaction sn-glycerol 3-phosphate + NAD(+) = dihydroxyacetone phosphate + NADH + H(+). Plays a role in regulating cardiac sodium current; decreased enzymatic activity with resulting increased levels of glycerol 3-phosphate activating the DPD1L-dependent SCN5A phosphorylation pathway, may ultimately lead to decreased sodium current; cardiac sodium current may also be reduced due to alterations of NAD(H) balance induced by DPD1L. This is Glycerol-3-phosphate dehydrogenase 1-like protein (Gpd1l) from Mus musculus (Mouse).